The sequence spans 104 residues: Ubiquitin-related modifier 1 homolog (104 aa).

1-thioglycine is present on Gly104. A Glycyl lysine isopeptide (Gly-Lys) (interchain with K-? in acceptor proteins) cross-link involves residue Gly104.

This sequence belongs to the URM1 family. Interacts with cer. C-terminal thiocarboxylation occurs in 2 steps, it is first acyl-adenylated (-COAMP) via the hesA/moeB/thiF part of the MOCS3 homolog, then thiocarboxylated (-COSH) via the rhodanese domain of the MOCS3 homolog.

It is found in the cytoplasm. It participates in tRNA modification; 5-methoxycarbonylmethyl-2-thiouridine-tRNA biosynthesis. In terms of biological role, acts as a sulfur carrier required for 2-thiolation of mcm(5)S(2)U at tRNA wobble positions of cytosolic tRNA(Lys), tRNA(Glu) and tRNA(Gln). Serves as sulfur donor in tRNA 2-thiolation reaction by being thiocarboxylated (-COSH) at its C-terminus by MOCS3. The sulfur is then transferred to tRNA to form 2-thiolation of mcm(5)S(2)U. Also acts as a ubiquitin-like protein (UBL) that is covalently conjugated via an isopeptide bond to lysine residues of target proteins such as Prx2/Jafrac1, Ciao1, Eip71CD and GILT1. The thiocarboxylated form serves as substrate for conjugation and oxidative stress specifically induces the formation of UBL-protein conjugates. The polypeptide is Ubiquitin-related modifier 1 homolog (Drosophila grimshawi (Hawaiian fruit fly)).